The sequence spans 108 residues: Transcription factor AmrZ (108 aa).

In terms of biological role, functions both as a transcriptional activator and a repressor of multiple genes encoding virulence factors as well as genes involved in environmental adaptation. Represses genes involved in iron homeostasis. Modulates intracellular levels of c-di-GMP which in turn regulates swimming motility and biofilm formation. The chain is Transcription factor AmrZ from Pseudomonas ogarae (strain DSM 112162 / CECT 30235 / F113).